The sequence spans 444 residues: UDP-N-acetylmuramate--L-alanine ligase (444 aa).

110 to 116 (GAHGKTS) is an ATP binding site.

Belongs to the MurCDEF family. Post-translationally, phosphorylated by StkP in vitro. Dephosphorylated by PhpP in vitro.

The protein localises to the cytoplasm. It carries out the reaction UDP-N-acetyl-alpha-D-muramate + L-alanine + ATP = UDP-N-acetyl-alpha-D-muramoyl-L-alanine + ADP + phosphate + H(+). It functions in the pathway cell wall biogenesis; peptidoglycan biosynthesis. Functionally, cell wall formation. In Streptococcus pneumoniae serotype 4 (strain ATCC BAA-334 / TIGR4), this protein is UDP-N-acetylmuramate--L-alanine ligase.